Reading from the N-terminus, the 228-residue chain is Large ribosomal subunit protein bL25 (228 aa).

Polar residues predominate over residues 1 to 10; the sequence is MNSLDANTRN. Disordered stretches follow at residues 1–20 and 187–228; these read MNSL…VRSL and MKEP…EEKK. Over residues 202–228 the composition is skewed to basic and acidic residues; it reads EDGKEAAPAAEGDKKDDGEKKATEEKK.

This sequence belongs to the bacterial ribosomal protein bL25 family. CTC subfamily. In terms of assembly, part of the 50S ribosomal subunit; part of the 5S rRNA/L5/L18/L25 subcomplex. Contacts the 5S rRNA. Binds to the 5S rRNA independently of L5 and L18.

In terms of biological role, this is one of the proteins that binds to the 5S RNA in the ribosome where it forms part of the central protuberance. The polypeptide is Large ribosomal subunit protein bL25 (Pelagibacter ubique (strain HTCC1062)).